A 785-amino-acid chain; its full sequence is Phenylalanine--tRNA ligase beta subunit (785 aa).

Residues 39-150 enclose the tRNA-binding domain; it reads RTWAAGVVVG…ASLPLGLDVG (112 aa). The B5 domain maps to 400–476; sequence RENRVVSLRP…RVVGYDRFAP (77 aa). Residues Asp454, Asp460, Glu463, and Glu464 each contribute to the Mg(2+) site. One can recognise an FDX-ACB domain in the interval 692–784; it reads SPFPPAARDL…LAERYSVDLR (93 aa).

This sequence belongs to the phenylalanyl-tRNA synthetase beta subunit family. Type 1 subfamily. In terms of assembly, tetramer of two alpha and two beta subunits. Mg(2+) serves as cofactor.

Its subcellular location is the cytoplasm. The catalysed reaction is tRNA(Phe) + L-phenylalanine + ATP = L-phenylalanyl-tRNA(Phe) + AMP + diphosphate + H(+). The chain is Phenylalanine--tRNA ligase beta subunit from Gloeobacter violaceus (strain ATCC 29082 / PCC 7421).